The primary structure comprises 578 residues: NADPH oxidase 4 (578 aa).

Topologically, residues 1-16 are cytoplasmic; that stretch reads MAVSWRSWLANEGVKH. A helical transmembrane segment spans residues 17–37; it reads LCLFIWLSMNVLLFWKTFLLY. The Extracellular portion of the chain corresponds to 38–62; it reads NQGPEYHYLHQMLGLGLCLSRASAS. In terms of domain architecture, Ferric oxidoreductase spans 58-303; the sequence is RASASVLNLN…YCAERLYRYI (246 aa). The helical transmembrane segment at 63-83 threads the bilayer; that stretch reads VLNLNCSLILLPMCRTLLAYL. At 84–103 the chain is on the cytoplasmic side; it reads RGSQKVPSRRTRRLLDKSRT. A helical membrane pass occupies residues 104–124; it reads FHITCGVTICIFSGVHVAAHL. Over 125-154 the chain is Extracellular; sequence VNALNFSVNYSEDFVELNAARYRDEDPRKL. N-linked (GlcNAc...) asparagine glycosylation is present at N133. Residues 155-175 traverse the membrane as a helical segment; the sequence is LFTTVPGLTGVCMVVVLFLMI. At 176-188 the chain is on the cytoplasmic side; the sequence is TASTYAIRVSNYD. A helical membrane pass occupies residues 189 to 209; sequence IFWYTHNLFFVFYMLLTLHVS. Over 210-424 the chain is Extracellular; sequence GGLLKYQTNL…SPFEESLNYE (215 aa). Residues 218-273 are E-loop; essential for H2O2 generating catalytic activity; it reads NLDTHPPGCISLNRTSSQNISLPEYFSEHFHEPFPEGFSKPAEFTQHKFVKICMEE. Residue N230 is glycosylated (N-linked (GlcNAc...) asparagine). Residues 248-575 are mediates interaction with TLR4; it reads HEPFPEGFSK…YGTRFEYNKE (328 aa). Residues 304-419 form the FAD-binding FR-type domain; the sequence is RSNKPVTIIS…DGPFGSPFEE (116 aa). Residues 425–445 form a helical membrane-spanning segment; it reads VSLCVAGGIGVTPFASILNTL. Topologically, residues 446–578 are cytoplasmic; the sequence is LDDWKPYKLR…RFEYNKESFS (133 aa).

In terms of assembly, interacts with protein disulfide isomerase. Interacts with, relocalizes and stabilizes CYBA/p22phox. Interacts with TLR4. Interacts with PPP1R15A. Interacts with LRRC8A; this interaction prevents the ubiquitin-mediated degradation of LRRC8A. Heme serves as cofactor. Deubiquitinated by USP19. Post-translationally, N-glycosylated and glycosylation is required for its proper function. In terms of processing, N-glycosylated. In terms of tissue distribution, expressed by distal tubular cells in kidney cortex and in endothelial cells (at protein level). Widely expressed. Strongly expressed in kidney and to a lower extent in heart, adipocytes, hepatoma, endothelial cells, skeletal muscle, brain, several brain tumor cell lines and airway epithelial cells.

It is found in the cytoplasm. The protein localises to the endoplasmic reticulum membrane. The protein resides in the cell membrane. It localises to the cell junction. Its subcellular location is the focal adhesion. It is found in the nucleus. The protein localises to the nucleolus. The protein resides in the perinuclear region. It catalyses the reaction NADPH + 2 O2 = 2 superoxide + NADP(+) + H(+). The enzyme catalyses NADPH + O2 + H(+) = H2O2 + NADP(+). Inhibited by plumbagin. Activated by phorbol 12-myristate 13-acetate (PMA). Activated by insulin. Inhibited by diphenylene iodonium. In terms of biological role, NADPH oxidase that catalyzes predominantly the reduction of oxygen to H2O2. Can also catalyze to a smaller extent, the reduction of oxygen to superoxide. May function as an oxygen sensor regulating the KCNK3/TASK-1 potassium channel and HIF1A activity. May regulate insulin signaling cascade. May play a role in apoptosis, bone resorption and lipolysaccharide-mediated activation of NFKB. May produce superoxide in the nucleus and play a role in regulating gene expression upon cell stimulation. Promotes ferroptosis, reactive oxygen species production and reduced glutathione (GSH) levels by activating NLRP3 inflammasome activation and cytokine release. Its function is as follows. NADPH oxidase that catalyzes the generation of superoxide from molecular oxygen utilizing NADPH as an electron donor. Involved in redox signaling in vascular cells. Modulates the nuclear activation of ERK1/2 and the ELK1 transcription factor, and is capable of inducing nuclear DNA damage. Functionally, lacks superoxide-generating NADPH oxidase activity. The chain is NADPH oxidase 4 (NOX4) from Homo sapiens (Human).